A 402-amino-acid polypeptide reads, in one-letter code: Flavohemoprotein (402 aa).

Residues 1-136 enclose the Globin domain; sequence MLSEKTIEIV…IADAFISIEA (136 aa). A heme b-binding site is contributed by H85. Active-site charge relay system residues include Y95 and E135. The reductase stretch occupies residues 147–402; the sequence is GGWKDFRNFV…EFFGPAASLQ (256 aa). The 111-residue stretch at 150–260 folds into the FAD-binding FR-type domain; it reads KDFRNFVVVK…SAPAGDFVLN (111 aa). FAD contacts are provided by residues Y188 and 204 to 207; that span reads RQYS. 273–278 lines the NADP(+) pocket; that stretch reads GVGITP. Position 394–397 (394–397) interacts with FAD; it reads FFGP.

This sequence belongs to the globin family. Two-domain flavohemoproteins subfamily. The protein in the C-terminal section; belongs to the flavoprotein pyridine nucleotide cytochrome reductase family. The cofactor is heme b. Requires FAD as cofactor.

The enzyme catalyses 2 nitric oxide + NADPH + 2 O2 = 2 nitrate + NADP(+) + H(+). It catalyses the reaction 2 nitric oxide + NADH + 2 O2 = 2 nitrate + NAD(+) + H(+). In terms of biological role, is involved in NO detoxification in an aerobic process, termed nitric oxide dioxygenase (NOD) reaction that utilizes O(2) and NAD(P)H to convert NO to nitrate, which protects the bacterium from various noxious nitrogen compounds. Therefore, plays a central role in the inducible response to nitrosative stress. This is Flavohemoprotein from Bacillus anthracis.